The following is a 694-amino-acid chain: ATP-dependent RNA helicase DHX33 (694 aa).

The 169-residue stretch at 78–246 folds into the Helicase ATP-binding domain; the sequence is LKELEANDTV…FNCKGMYLEG (169 aa). Position 91–98 (91–98) interacts with ATP; sequence SETGSGKT. A DEAH box motif is present at residues 188–191; it reads DEAH. One can recognise a Helicase C-terminal domain in the interval 270-443; it reads TLFHIHRTTP…SMVLQLLALD (174 aa).

The protein belongs to the DEAD box helicase family. DEAH subfamily.

It localises to the nucleus. It is found in the nucleolus. The enzyme catalyses ATP + H2O = ADP + phosphate + H(+). Its function is as follows. Part of a translational control module, also containing pths/DDX47 and ais/DDX52, which coordinates germline stem cell differentiation with ribosome biogenesis during oogenesis. This module allows for coregulation of ribosomal proteins and non1/GTPBP4, a p53 repressor, preventing p53 stabilization, cell cycle arrest and loss of stem cell differentiation. The sequence is that of ATP-dependent RNA helicase DHX33 from Drosophila melanogaster (Fruit fly).